The sequence spans 640 residues: F-box protein MET30 (640 aa).

The segment covering 1 to 19 (MRRERQRMMSFEDKDKDDL) has biased composition (basic and acidic residues). The interval 1-84 (MRRERQRMMS…ATNDSGTRVQ (84 aa)) is disordered. A necessary to mediate nuclear localization region spans residues 1–299 (MRRERQRMMS…KGHCRIQEFK (299 aa)). Polar residues-rich tracts occupy residues 45 to 56 (TGSSDDLAQGSS) and 64 to 82 (ATRSPSSSPDLATNDSGTR). Phosphoserine is present on Ser67. The segment at 180 to 225 (KIDFISILPQELSLKILSYLDCQSLCNATRVCRKWQKLADDDRVWY) is interaction with SKP1/CBF3D. The segment at 180–277 (KIDFISILPQ…TQTTRPWKVI (98 aa)) is important for mediating homomultimerization. The region spanning 181-227 (IDFISILPQELSLKILSYLDCQSLCNATRVCRKWQKLADDDRVWYHM) is the F-box domain. The interaction with MET4 stretch occupies residues 277 to 640 (IYRERFKVES…VKMYKFDLND (364 aa)). WD repeat units follow at residues 300 to 328 (GHMDGVLTLQFNYRLLFTGSYDSTIGIWD), 340 to 368 (GHSDGVKTLYFDDRKLITGSLDKTIRVWN), 380 to 408 (GHSDSVLSVDSYQKVIVSGSADKTVKVWH), 419 to 449 (GHTEWVNCVKLHPKSFSCFSCSDDTTIRMWD), 461 to 499 (GHVGQVQKIIPLTIKDVENLATDNTSDGSSPQDDPTMTD), 509 to 538 (NEQETVLDENIPYPTHLLSCGLDNTIKLWD), 550 to 578 (GHVEGVWDIAADNFRIISGSHDGSIKVWD), and 607 to 635 (DKVAPIACVCIGDSECFSGDEFGCVKMYK). A compositionally biased stretch (polar residues) spans 481 to 495 (ATDNTSDGSSPQDDP). A disordered region spans residues 481–516 (ATDNTSDGSSPQDDPTMTDGADESDTPSNEQETVLD).

This sequence belongs to the WD repeat MET30/SCONB/SCON-2 family. Homomultimer. Interacts with CDC53 and SKP1/CBF3D to form the E3 ubiquitin ligase complex SCF(Met30). Interacts with MET4.

It is found in the cytoplasm. The protein resides in the nucleus. The protein operates within protein modification; protein ubiquitination. Its function is as follows. Substrate-recognition component of the SCF(Met30) complex, an E3 ubiquitin ligase complex that mediates the ubiquitination and subsequent proteasomal degradation of target proteins. Negatively regulates sulfur amino acids biosynthesis genes expression. Controls cell cycle function (being required for the G1/S transition and M-phase but not the S-phase), sulfur metabolism, and methionine biosynthesis as part of the SCF(Met30) complex. Required for the efficient binding of CDC45 and MCM proteins to origins of replication. Required for efficient expression of G1 cyclins. The SCF(Met30) complex catalyzes ubiquitination and degradation of the Cdk-inhibitory kinase SWE1. Involved in the S-adenosylmethionine (AdoMet)-mediated inhibition of the transcription function of MET4. The SCF(Met30) complex mediates ubiquitination and subsequent degradation of MET4 and the cellular response to cadmium. The SCF(Met30) complex acts as an inhibitor of autophagy by promoting ubiquitination and degradation of ATG9 in normal conditions. This chain is F-box protein MET30, found in Saccharomyces cerevisiae (strain ATCC 204508 / S288c) (Baker's yeast).